Here is a 99-residue protein sequence, read N- to C-terminus: Small ribosomal subunit protein bS18 (99 aa).

Residues 1-25 (MAEDHPSVDLDTHLSSPRESEESAP) show a composition bias toward basic and acidic residues. The disordered stretch occupies residues 1-28 (MAEDHPSVDLDTHLSSPRESEESAPKKN).

This sequence belongs to the bacterial ribosomal protein bS18 family. In terms of assembly, part of the 30S ribosomal subunit. Forms a tight heterodimer with protein bS6.

Functionally, binds as a heterodimer with protein bS6 to the central domain of the 16S rRNA, where it helps stabilize the platform of the 30S subunit. This Treponema pallidum (strain Nichols) protein is Small ribosomal subunit protein bS18.